Reading from the N-terminus, the 137-residue chain is Nucleoside diphosphate kinase (137 aa).

ATP contacts are provided by Lys-9, Phe-57, Arg-85, Thr-91, Arg-102, and Asn-112. His-115 serves as the catalytic Pros-phosphohistidine intermediate.

The protein belongs to the NDK family. As to quaternary structure, homotetramer. It depends on Mg(2+) as a cofactor.

It localises to the cytoplasm. The enzyme catalyses a 2'-deoxyribonucleoside 5'-diphosphate + ATP = a 2'-deoxyribonucleoside 5'-triphosphate + ADP. It carries out the reaction a ribonucleoside 5'-diphosphate + ATP = a ribonucleoside 5'-triphosphate + ADP. Its function is as follows. Major role in the synthesis of nucleoside triphosphates other than ATP. The ATP gamma phosphate is transferred to the NDP beta phosphate via a ping-pong mechanism, using a phosphorylated active-site intermediate. This Nitratiruptor sp. (strain SB155-2) protein is Nucleoside diphosphate kinase.